The sequence spans 428 residues: Light-independent protochlorophyllide reductase subunit N (428 aa).

Residues Cys29, Cys54, and Cys115 each contribute to the [4Fe-4S] cluster site.

This sequence belongs to the BchN/ChlN family. In terms of assembly, protochlorophyllide reductase is composed of three subunits; BchL, BchN and BchB. Forms a heterotetramer of two BchB and two BchN subunits. [4Fe-4S] cluster is required as a cofactor.

The enzyme catalyses chlorophyllide a + oxidized 2[4Fe-4S]-[ferredoxin] + 2 ADP + 2 phosphate = protochlorophyllide a + reduced 2[4Fe-4S]-[ferredoxin] + 2 ATP + 2 H2O. It functions in the pathway porphyrin-containing compound metabolism; bacteriochlorophyll biosynthesis (light-independent). Functionally, component of the dark-operative protochlorophyllide reductase (DPOR) that uses Mg-ATP and reduced ferredoxin to reduce ring D of protochlorophyllide (Pchlide) to form chlorophyllide a (Chlide). This reaction is light-independent. The NB-protein (BchN-BchB) is the catalytic component of the complex. In Cereibacter sphaeroides (strain ATCC 17023 / DSM 158 / JCM 6121 / CCUG 31486 / LMG 2827 / NBRC 12203 / NCIMB 8253 / ATH 2.4.1.) (Rhodobacter sphaeroides), this protein is Light-independent protochlorophyllide reductase subunit N.